We begin with the raw amino-acid sequence, 392 residues long: Aminomethyltransferase, mitochondrial (392 aa).

A mitochondrion-targeting transit peptide spans 1–16; the sequence is MLRAGCRAALARRHLS. Positions 221, 250, and 388 each coordinate substrate.

The protein belongs to the GcvT family. In terms of assembly, the glycine cleavage system is composed of four proteins: P, T, L and H.

It is found in the mitochondrion. The catalysed reaction is N(6)-[(R)-S(8)-aminomethyldihydrolipoyl]-L-lysyl-[protein] + (6S)-5,6,7,8-tetrahydrofolate = N(6)-[(R)-dihydrolipoyl]-L-lysyl-[protein] + (6R)-5,10-methylene-5,6,7,8-tetrahydrofolate + NH4(+). Its function is as follows. The glycine cleavage system catalyzes the degradation of glycine. The sequence is that of Aminomethyltransferase, mitochondrial from Gallus gallus (Chicken).